The chain runs to 68 residues: Ribosome modulation factor (68 aa).

The protein belongs to the ribosome modulation factor family.

It is found in the cytoplasm. Functionally, during stationary phase, converts 70S ribosomes to an inactive dimeric form (100S ribosomes). The polypeptide is Ribosome modulation factor (Saccharophagus degradans (strain 2-40 / ATCC 43961 / DSM 17024)).